The following is a 441-amino-acid chain: NADH-quinone oxidoreductase subunit D (441 aa).

It belongs to the complex I 49 kDa subunit family. In terms of assembly, NDH-1 is composed of 14 different subunits. Subunits NuoB, C, D, E, F, and G constitute the peripheral sector of the complex.

The protein localises to the cell membrane. The catalysed reaction is a quinone + NADH + 5 H(+)(in) = a quinol + NAD(+) + 4 H(+)(out). NDH-1 shuttles electrons from NADH, via FMN and iron-sulfur (Fe-S) centers, to quinones in the respiratory chain. The immediate electron acceptor for the enzyme in this species is believed to be a menaquinone. Couples the redox reaction to proton translocation (for every two electrons transferred, four hydrogen ions are translocated across the cytoplasmic membrane), and thus conserves the redox energy in a proton gradient. This Mycobacterium avium (strain 104) protein is NADH-quinone oxidoreductase subunit D.